The sequence spans 167 residues: Small ribosomal subunit protein uS5 (167 aa).

The S5 DRBM domain occupies 12-75; the sequence is LQEKLIAVNR…EKARRNMVTV (64 aa).

This sequence belongs to the universal ribosomal protein uS5 family. Part of the 30S ribosomal subunit. Contacts proteins S4 and S8.

In terms of biological role, with S4 and S12 plays an important role in translational accuracy. Its function is as follows. Located at the back of the 30S subunit body where it stabilizes the conformation of the head with respect to the body. This Shewanella sp. (strain W3-18-1) protein is Small ribosomal subunit protein uS5.